The sequence spans 451 residues: Eukaryotic translation initiation factor 3 subunit E (451 aa).

In terms of domain architecture, PCI spans 256–425; the sequence is TDLFFSPAYI…GTVIMNHPPQ (170 aa).

Belongs to the eIF-3 subunit E family. In terms of assembly, component of the eukaryotic translation initiation factor 3 (eIF-3) complex.

Its subcellular location is the cytoplasm. Its function is as follows. Component of the eukaryotic translation initiation factor 3 (eIF-3) complex, which is involved in protein synthesis of a specialized repertoire of mRNAs and, together with other initiation factors, stimulates binding of mRNA and methionyl-tRNAi to the 40S ribosome. The eIF-3 complex specifically targets and initiates translation of a subset of mRNAs involved in cell proliferation. The protein is Eukaryotic translation initiation factor 3 subunit E (int6) of Aspergillus oryzae (strain ATCC 42149 / RIB 40) (Yellow koji mold).